The chain runs to 289 residues: Agroclavine dehydrogenase (289 aa).

The protein belongs to the fgaFS/easG family. Monomer.

The enzyme catalyses agroclavine + NADP(+) = didehydroagroclavine + NADPH + H(+). Its pathway is alkaloid biosynthesis; ergot alkaloid biosynthesis. Functionally, agroclavine dehydrogenase; part of the gene cluster that mediates the biosynthesis of fungal ergot alkaloid ergovaline, the predominant ergopeptine product in E.festucae var. lolii. DmaW catalyzes the first step of ergot alkaloid biosynthesis by condensing dimethylallyl diphosphate (DMAP) and tryptophan to form 4-dimethylallyl-L-tryptophan. The second step is catalyzed by the methyltransferase easF that methylates 4-dimethylallyl-L-tryptophan in the presence of S-adenosyl-L-methionine, resulting in the formation of 4-dimethylallyl-L-abrine. The catalase easC and the FAD-dependent oxidoreductase easE then transform 4-dimethylallyl-L-abrine to chanoclavine-I which is further oxidized by easD in the presence of NAD(+), resulting in the formation of chanoclavine-I aldehyde. Agroclavine dehydrogenase easG then mediates the conversion of chanoclavine-I aldehyde to agroclavine via a non-enzymatic adduct reaction: the substrate is an iminium intermediate that is formed spontaneously from chanoclavine-I aldehyde in the presence of glutathione. Further conversion of agroclavine to paspalic acid is a two-step process involving oxidation of agroclavine to elymoclavine and of elymoclavine to paspalic acid, the second step being performed by the elymoclavine oxidase cloA. However, cloA does not encode a functional enzyme indicating that C.fusiformis terminates its ergot alkaloid pathway at elymoclavine. This is Agroclavine dehydrogenase from Claviceps fusiformis (Ergot fungus).